Here is a 338-residue protein sequence, read N- to C-terminus: Sesquiterpene synthase 1 (338 aa).

Mg(2+) contacts are provided by D93, N228, S232, and E236. Positions 93–97 match the DDXXD motif motif; the sequence is DNISD. The NSE/DTE motif motif lies at 228-236; the sequence is NDIFSYNVE. Residues R316 and Y317 each coordinate (2E,6E)-farnesyl diphosphate.

Belongs to the terpene synthase family. Mg(2+) serves as cofactor.

It catalyses the reaction (2E,6E)-farnesyl diphosphate = alpha-copaene + diphosphate. The enzyme catalyses (2E,6E)-farnesyl diphosphate = beta-copaene + diphosphate. The catalysed reaction is (2E,6E)-farnesyl diphosphate = alpha-muurolene + diphosphate. It carries out the reaction (2E,6E)-farnesyl diphosphate = gamma-muurolene + diphosphate. It catalyses the reaction (2E,6E)-farnesyl diphosphate = delta-cadinene + diphosphate. In terms of biological role, terpene cyclase that catalyzes the cyclization of farnesyl diphosphate (FPP) to various sesquiterpenes, including alpha-copaene, beta-copaene, beta-elemene, alpha-muurolene, gamma-muurolene and delta-cadinene. The sequence is that of Sesquiterpene synthase 1 from Postia placenta (strain ATCC 44394 / Madison 698-R) (Brown rot fungus).